A 582-amino-acid polypeptide reads, in one-letter code: Dihydroxy-acid dehydratase 3 (582 aa).

Cys67 is a [2Fe-2S] cluster binding site. Asp99 is a binding site for Mg(2+). Cys140 is a [2Fe-2S] cluster binding site. Residues Asp141 and Lys142 each coordinate Mg(2+). Lys142 carries the N6-carboxylysine modification. Cys212 is a binding site for [2Fe-2S] cluster. Glu462 lines the Mg(2+) pocket. Catalysis depends on Ser488, which acts as the Proton acceptor.

Belongs to the IlvD/Edd family. In terms of assembly, homodimer. Requires [2Fe-2S] cluster as cofactor. It depends on Mg(2+) as a cofactor.

The catalysed reaction is (2R)-2,3-dihydroxy-3-methylbutanoate = 3-methyl-2-oxobutanoate + H2O. It carries out the reaction (2R,3R)-2,3-dihydroxy-3-methylpentanoate = (S)-3-methyl-2-oxopentanoate + H2O. It functions in the pathway amino-acid biosynthesis; L-isoleucine biosynthesis; L-isoleucine from 2-oxobutanoate: step 3/4. The protein operates within amino-acid biosynthesis; L-valine biosynthesis; L-valine from pyruvate: step 3/4. Its function is as follows. Functions in the biosynthesis of branched-chain amino acids. Catalyzes the dehydration of (2R,3R)-2,3-dihydroxy-3-methylpentanoate (2,3-dihydroxy-3-methylvalerate) into 2-oxo-3-methylpentanoate (2-oxo-3-methylvalerate) and of (2R)-2,3-dihydroxy-3-methylbutanoate (2,3-dihydroxyisovalerate) into 2-oxo-3-methylbutanoate (2-oxoisovalerate), the penultimate precursor to L-isoleucine and L-valine, respectively. This is Dihydroxy-acid dehydratase 3 from Bradyrhizobium diazoefficiens (strain JCM 10833 / BCRC 13528 / IAM 13628 / NBRC 14792 / USDA 110).